A 76-amino-acid chain; its full sequence is Small ribosomal subunit protein bS21C (76 aa).

The tract at residues 52 to 76 is disordered; that stretch reads GRQRKLARKQMQREGLLPTKPRKDK.

Belongs to the bacterial ribosomal protein bS21 family.

The chain is Small ribosomal subunit protein bS21C (rpsU3) from Agrobacterium fabrum (strain C58 / ATCC 33970) (Agrobacterium tumefaciens (strain C58)).